A 451-amino-acid chain; its full sequence is Golgi reassembly-stacking protein 2 (451 aa).

Residue glycine 2 is the site of N-myristoyl glycine attachment. PDZ GRASP-type domains lie at 15-105 (EGYH…FCSF) and 111-199 (NVWH…YGYL). The GRASP stretch occupies residues 15–215 (EGYHVLRVQE…PFEEGKKISL (201 aa)). Residues arginine 30 and arginine 47 each carry the dimethylated arginine modification. Positions 194–199 (IGYGYL) are important for membrane binding. At serine 214 the chain carries Phosphoserine. Residue threonine 222 is modified to Phosphothreonine. Threonine 225 carries the post-translational modification Phosphothreonine; by MAPK. The segment covering 236-252 (LSSVSPPSLSPPGTTGV) has biased composition (low complexity). 2 disordered regions span residues 236–255 (LSSV…VEQS) and 377–451 (EGSS…SEPS). Residues 410-424 (SSLTVDVTSPASKVP) show a composition bias toward polar residues. Residue serine 411 is modified to Phosphoserine. 2 positions are modified to phosphothreonine: threonine 417 and threonine 435. Serine 443 and serine 448 each carry phosphoserine.

Belongs to the GORASP family. As to quaternary structure, homodimer. Homooligomer. ER stress induces phosphorylation-dependent monomerization. Interacts with BLZF1/Golgin 45. Identified in a complex with RAB2 and GORASP2. Interacts with JAM2 and JAM3. Interacts with members of the p24 cargo receptors. Interacts with CNIH and the cytoplasmic domain of transmembrane TGFA, prior its transit in the trans-Golgi. Interacts with KCTD5. Interacts with TMED2 and TMED3. Interacts with SEC16A in response to ER stress. Interacts (via PDZ GRASP-type 1 domain) with core-glycosylated CFTR in response to ER stress. In terms of processing, myristoylated. Myristoylation is essential for the Golgi targeting. Palmitoylated. Post-translationally, phosphorylated in mitotic cells. ER stress-induced phosphorylation at Ser-443 induces monomerization and subsequent relocalization from Golgi to ER which is essential for mediating unconventional (ER/Golgi-independent) trafficking of CFTR to the cell membrane. Detected in lung, heart and testis. Colocalized in a polarized fashion in the acrosome region with JAM3 in round spermatids (at protein level).

It is found in the golgi apparatus membrane. Its subcellular location is the endoplasmic reticulum membrane. The protein localises to the golgi apparatus. In terms of biological role, key structural protein of the Golgi apparatus. The membrane cisternae of the Golgi apparatus adhere to each other to form stacks, which are aligned side by side to form the Golgi ribbon. Acting in concert with GORASP1/GRASP65, is required for the formation and maintenance of the Golgi ribbon, and may be dispensable for the formation of stacks. However, other studies suggest that GORASP2 plays a role in assembly and membrane stacking of the Golgi cisternae, and in the process by which Golgi stacks reform after breakdown during mitosis and meiosis. May regulate the intracellular transport and presentation of a defined set of transmembrane proteins, such as transmembrane TGFA. Required for normal acrosome formation during spermiogenesis and normal male fertility, probably by promoting colocalization of JAM2 and JAM3 at contact sites between germ cells and Sertoli cells. Mediates ER stress-induced unconventional (ER/Golgi-independent) trafficking of core-glycosylated CFTR to cell membrane. The polypeptide is Golgi reassembly-stacking protein 2 (Gorasp2) (Mus musculus (Mouse)).